The sequence spans 210 residues: Protein MSO1 (210 aa).

Methionine 1 carries the N-acetylmethionine modification. Residue methionine 2 is modified to N-acetylserine. The disordered stretch occupies residues 88-210 (KHDMKKQNSR…LKRRNNDYGF (123 aa)). Residue serine 102 is modified to Phosphoserine. Polar residues predominate over residues 117-141 (TPSSNGNTPEYTPASKSFQDIYNNH). 2 stretches are compositionally biased toward low complexity: residues 142 to 161 (TSSS…RPSA) and 172 to 183 (SKTSNSFNTSST).

Interacts physically with SEC1.

Its function is as follows. Involved in secretion. Component of the secretory vesicle docking complex. The chain is Protein MSO1 (MSO1) from Saccharomyces cerevisiae (strain ATCC 204508 / S288c) (Baker's yeast).